Here is a 485-residue protein sequence, read N- to C-terminus: 4-alpha-glucanotransferase (485 aa).

This sequence belongs to the disproportionating enzyme family.

Its subcellular location is the cytoplasm. It carries out the reaction Transfers a segment of a (1-&gt;4)-alpha-D-glucan to a new position in an acceptor, which may be glucose or a (1-&gt;4)-alpha-D-glucan.. This Aquifex aeolicus (strain VF5) protein is 4-alpha-glucanotransferase (malQ).